Here is a 335-residue protein sequence, read N- to C-terminus: Terpene synthase 4 (335 aa).

The DDxx(x)D/E motif motif lies at 103 to 108 (DDYIFE). The NDxxSxxxD/E motif motif lies at 243 to 251 (NDLYSFNRE).

The protein belongs to the terpene synthase family.

It carries out the reaction (2E,6E)-farnesyl diphosphate + H2O = (6E)-nerolidol + diphosphate. Terpene synthase that converts its substrate farnesyl diphosphate (FPP) into the sesquiterpene (E)-nerolidol. This is Terpene synthase 4 from Dictyostelium discoideum (Social amoeba).